The primary structure comprises 364 residues: Coproporphyrin III ferrochelatase (364 aa).

Fe-coproporphyrin III-binding residues include Arg29 and Tyr118. Fe(2+) is bound by residues His169 and Glu250.

Belongs to the ferrochelatase family.

The protein resides in the cytoplasm. It catalyses the reaction Fe-coproporphyrin III + 2 H(+) = coproporphyrin III + Fe(2+). It functions in the pathway porphyrin-containing compound metabolism; protoheme biosynthesis. Its function is as follows. Involved in coproporphyrin-dependent heme b biosynthesis. Catalyzes the insertion of ferrous iron into coproporphyrin III to form Fe-coproporphyrin III. This chain is Coproporphyrin III ferrochelatase, found in Streptococcus pneumoniae (strain ATCC 700669 / Spain 23F-1).